The chain runs to 240 residues: Tubulin alpha chain (240 aa).

Asn17 is a GTP binding site. Glu43 is a catalytic residue.

Belongs to the tubulin family. Dimer of alpha and beta chains. A typical microtubule is a hollow water-filled tube with an outer diameter of 25 nm and an inner diameter of 15 nM. Alpha-beta heterodimers associate head-to-tail to form protofilaments running lengthwise along the microtubule wall with the beta-tubulin subunit facing the microtubule plus end conferring a structural polarity. Microtubules usually have 13 protofilaments but different protofilament numbers can be found in some organisms and specialized cells. It depends on Mg(2+) as a cofactor. Post-translationally, undergoes a tyrosination/detyrosination cycle, the cyclic removal and re-addition of a C-terminal tyrosine residue by the enzymes tubulin tyrosine carboxypeptidase (TTCP) and tubulin tyrosine ligase (TTL), respectively.

It localises to the cytoplasm. It is found in the cytoskeleton. It carries out the reaction GTP + H2O = GDP + phosphate + H(+). Its function is as follows. Tubulin is the major constituent of microtubules, a cylinder consisting of laterally associated linear protofilaments composed of alpha- and beta-tubulin heterodimers. Microtubules grow by the addition of GTP-tubulin dimers to the microtubule end, where a stabilizing cap forms. Below the cap, tubulin dimers are in GDP-bound state, owing to GTPase activity of alpha-tubulin. The chain is Tubulin alpha chain from Octopus vulgaris (Common octopus).